The sequence spans 122 residues: Large ribosomal subunit protein bL12 (122 aa).

It belongs to the bacterial ribosomal protein bL12 family. As to quaternary structure, homodimer. Part of the ribosomal stalk of the 50S ribosomal subunit. Forms a multimeric L10(L12)X complex, where L10 forms an elongated spine to which 2 to 4 L12 dimers bind in a sequential fashion. Binds GTP-bound translation factors.

In terms of biological role, forms part of the ribosomal stalk which helps the ribosome interact with GTP-bound translation factors. Is thus essential for accurate translation. This Streptococcus mutans serotype c (strain ATCC 700610 / UA159) protein is Large ribosomal subunit protein bL12.